A 362-amino-acid chain; its full sequence is Peptide chain release factor 1 (362 aa).

Glutamine 240 is subject to N5-methylglutamine.

It belongs to the prokaryotic/mitochondrial release factor family. Post-translationally, methylated by PrmC. Methylation increases the termination efficiency of RF1.

The protein localises to the cytoplasm. Peptide chain release factor 1 directs the termination of translation in response to the peptide chain termination codons UAG and UAA. The sequence is that of Peptide chain release factor 1 from Bifidobacterium longum (strain DJO10A).